An 80-amino-acid polypeptide reads, in one-letter code: MEIPKLLYIAVIAIGLSGSLTWATPLANPLAEAEAEAKATAEATAEALAEALAEPEPGLPILAAAVVIPFIHHYLVGKFG.

The first 23 residues, Met1 to Ala23, serve as a signal peptide directing secretion. A propeptide spanning residues Thr24–Pro57 is cleaved from the precursor. Phe79 is modified (phenylalanine amide).

This sequence belongs to the formicidae venom clade 1 family. In terms of tissue distribution, expressed by the venom gland.

Its subcellular location is the secreted. In terms of biological role, vertebrate-selective toxin that causes pain by targeting voltage-gated sodium channels. The chain is Myrmicitoxin(1)-Pr1a from Pogonomyrmex rugosus (Desert harvester ant).